Reading from the N-terminus, the 23-residue chain is U1-ctenitoxin-Co1a (23 aa).

Cys10 and Cys20 are joined by a disulfide.

In terms of tissue distribution, expressed by the venom gland.

It is found in the secreted. In terms of biological role, insecticidal neurotoxin that reversibly inhibits the N-methyl-D-aspartate (NMDA)-subtype of ionotropic glutamate receptor (GRIN) and inhibits inactivation of insect sodium channels (Nav). In vivo, is highly toxic to insects. This is U1-ctenitoxin-Co1a from Ctenus ornatus (Brazilian spider).